Reading from the N-terminus, the 534-residue chain is NAD(P)H-quinone oxidoreductase chain 4 1 (534 aa).

14 consecutive transmembrane segments (helical) span residues 6–26, 34–54, 87–107, 113–133, 136–156, 169–189, 209–229, 243–263, 277–297, 311–331, 332–352, 376–396, 418–438, and 464–484; these read IPWL…IPLI, IRWY…TAFW, LSMP…LAAW, PKLF…VFAV, LLLF…LISI, FILY…ALAF, ALEL…LPIF, SAPV…YGLI, FAPL…LTAF, ISHM…GMNG, AVLQ…LSGV, FAMF…SGFV, IAIF…LSML, and IFVA…PKLA.

The protein belongs to the complex I subunit 4 family.

It localises to the cellular thylakoid membrane. The catalysed reaction is a plastoquinone + NADH + (n+1) H(+)(in) = a plastoquinol + NAD(+) + n H(+)(out). It catalyses the reaction a plastoquinone + NADPH + (n+1) H(+)(in) = a plastoquinol + NADP(+) + n H(+)(out). In terms of biological role, NDH-1 shuttles electrons from NAD(P)H, via FMN and iron-sulfur (Fe-S) centers, to quinones in the respiratory chain. The immediate electron acceptor for the enzyme in this species is believed to be plastoquinone. Couples the redox reaction to proton translocation (for every two electrons transferred, four hydrogen ions are translocated across the cytoplasmic membrane), and thus conserves the redox energy in a proton gradient. In Picosynechococcus sp. (strain ATCC 27264 / PCC 7002 / PR-6) (Agmenellum quadruplicatum), this protein is NAD(P)H-quinone oxidoreductase chain 4 1.